The following is a 281-amino-acid chain: Large ribosomal subunit protein uL2 (281 aa).

The segment covering 27 to 38 (DSPEKSLTEPLK) has biased composition (basic and acidic residues). 2 disordered regions span residues 27–59 (DSPE…GGHK) and 225–281 (AMNP…ARSQ). The span at 45 to 59 (VHGHITRRHQGGGHK) shows a compositional bias: basic residues.

It belongs to the universal ribosomal protein uL2 family. In terms of assembly, part of the 50S ribosomal subunit. Forms a bridge to the 30S subunit in the 70S ribosome.

In terms of biological role, one of the primary rRNA binding proteins. Required for association of the 30S and 50S subunits to form the 70S ribosome, for tRNA binding and peptide bond formation. It has been suggested to have peptidyltransferase activity; this is somewhat controversial. Makes several contacts with the 16S rRNA in the 70S ribosome. The sequence is that of Large ribosomal subunit protein uL2 from Myxococcus xanthus (strain DK1622).